The sequence spans 63 residues: Large ribosomal subunit protein uL30 (63 aa).

This sequence belongs to the universal ribosomal protein uL30 family. As to quaternary structure, part of the 50S ribosomal subunit.

The sequence is that of Large ribosomal subunit protein uL30 from Xanthomonas axonopodis pv. citri (strain 306).